A 919-amino-acid polypeptide reads, in one-letter code: MGEVAGGAAPGPPRSGLVSIIIGAEDEDFENELEANPEDQNSQFQSLEQVKRRPAHLMALLQHVALQFEPGPLLCCLHADMLSSLGPKEAKKAFLDFYHSFLEKTAVLRVPVPPSVAFELDRTRPDLISEDVQRRFIQEVVQSQQAAVTRQLEDFRSKRLMGMTPWEQELSLLEPWIGKDRGNYEARERHVAERLLSHLEEMQHTISTDEEKSAAVVTAISLYMRHLGVRTKSGDKKSGRNFFRKKVMGNRRSDEPPKTKKGLSSILDPARWNRGEPSAPDCRHLKVEVDEKPGPADRKGSLGISSRDRTVGTPGQDNPGVSLHPLSVDSLDSREPGVDTPQEPGDTPPQGPTSLEPLAPPESTEDNGETESPEPGDDGEPGRSGLEQEPEEPPGWRELVPSDTLLGLPKNQVKRQEVISELLVTEAAHVRMLRVLHDLFYQPMAEGGFFPLEELQNIFPSLDELIEVHSLFLDRLMKRRQESGYLIEEIGDVLLARFDGAEGSWFQKISSRFCSRQSFALEQLKAKQRKEPRFCAFVQEAESRPRCRRLQLKDMIPTEMQRLTKYPLLLQSIGQNTEEPAERAKVELAAECCREILHHVNQAVRDMEDLLRLKDYQRRLDLTHLRQSNDPMLSEFKNLDITKKKLVHEGPLTWRLTKDKAVEVHVLLLDDLLLLLQRQDEGCCSSHTSRTLTPTPDGKTMLRPVLRLTSAMTREVATDHKAFYVIFTWDQEAQIYELVAQTSSERKSWCALITETAGSLKVPAPASRPKPRPSPSSTREPLLSSSENGTGGTEAAPADARTERILNDLLPFCRPGPEGQLAATALQKVLSLKQILLSTEEDSGAGPPRDGDGVPGGGAPGPTHTQEVEENLLSLEVVIKQLEELEEEFCRLRPFLSQLGEILSPNLAAPERSAQTGLS.

An RGSL domain is found at 39–230 (DQNSQFQSLE…SLYMRHLGVR (192 aa)). The interval 247–402 (VMGNRRSDEP…PPGWRELVPS (156 aa)) is disordered. Positions 281-310 (DCRHLKVEVDEKPGPADRKGSLGISSRDRT) are enriched in basic and acidic residues. Residues 363 to 379 (STEDNGETESPEPGDDG) show a composition bias toward acidic residues. A Phosphoserine modification is found at Ser372. A DH domain is found at 414–603 (KRQEVISELL…REILHHVNQA (190 aa)). The region spanning 645–758 (KLVHEGPLTW…WCALITETAG (114 aa)) is the PH domain. At Thr693 the chain carries Phosphothreonine. Tyr736 is subject to Phosphotyrosine; by JAK2. Disordered stretches follow at residues 761-800 (KVPA…PADA) and 839-865 (TEED…PTHT). Low complexity predominate over residues 775-787 (PSSTREPLLSSSE). A coiled-coil region spans residues 864–893 (HTQEVEENLLSLEVVIKQLEELEEEFCRLR). Ser904 carries the post-translational modification Phosphoserine.

In terms of assembly, interacts with RHOA, GNA12 and GNA13. Homooligomerizes through the coiled coil region. Interacts with CTNNAL1. May interact with CCPG1. Post-translationally, phosphorylated by PKCA. Angiotensin-2 induced Tyr-736 phosphorylation is mediated by JAK2.

Its subcellular location is the cytoplasm. The protein localises to the membrane. In terms of biological role, seems to play a role in the regulation of RhoA GTPase by guanine nucleotide-binding alpha-12 (GNA12) and alpha-13 (GNA13) subunits. Acts as a GTPase-activating protein (GAP) for GNA12 and GNA13, and as guanine nucleotide exchange factor (GEF) for RhoA GTPase. Activated G alpha 13/GNA13 stimulates the RhoGEF activity through interaction with the RGS-like domain. This GEF activity is inhibited by binding to activated GNA12. Mediates angiotensin-2-induced RhoA activation. In lymphoid follicles, may trigger activation of GNA13 as part of S1PR2-dependent signaling pathway that leads to inhibition of germinal center (GC) B cell growth and migration outside the GC niche. The chain is Rho guanine nucleotide exchange factor 1 (Arhgef1) from Rattus norvegicus (Rat).